Reading from the N-terminus, the 320-residue chain is tRNA dimethylallyltransferase (320 aa).

Position 17–24 (17–24 (GPTAVGKT)) interacts with ATP. 19–24 (TAVGKT) provides a ligand contact to substrate. An interaction with substrate tRNA region spans residues 42-45 (DSMQ).

This sequence belongs to the IPP transferase family. In terms of assembly, monomer. Mg(2+) serves as cofactor.

It carries out the reaction adenosine(37) in tRNA + dimethylallyl diphosphate = N(6)-dimethylallyladenosine(37) in tRNA + diphosphate. Catalyzes the transfer of a dimethylallyl group onto the adenine at position 37 in tRNAs that read codons beginning with uridine, leading to the formation of N6-(dimethylallyl)adenosine (i(6)A). This chain is tRNA dimethylallyltransferase, found in Bacillus thuringiensis (strain Al Hakam).